A 198-amino-acid polypeptide reads, in one-letter code: Superoxide dismutase [Fe] (198 aa).

Fe cation-binding residues include His27, His74, Asp158, and His162.

It belongs to the iron/manganese superoxide dismutase family. Homodimer. Fe cation is required as a cofactor.

It is found in the cytoplasm. The catalysed reaction is 2 superoxide + 2 H(+) = H2O2 + O2. Destroys superoxide anion radicals which are normally produced within the cells and which are toxic to biological systems. This Plasmodium malariae protein is Superoxide dismutase [Fe] (SODB).